A 549-amino-acid polypeptide reads, in one-letter code: Probable protein kinase UbiB (549 aa).

Positions 123 to 501 constitute a Protein kinase domain; that stretch reads DFDDIPLASA…QQKAHKSNYL (379 aa). Residues 129-137 and Lys-152 contribute to the ATP site; that span reads LASASISQV. Residue Asp-287 is the Proton acceptor of the active site. 2 consecutive transmembrane segments (helical) span residues 498–518 and 520–540; these read SNYL…LINQ and ATLW…VLGW.

It belongs to the ABC1 family. UbiB subfamily.

Its subcellular location is the cell inner membrane. The protein operates within cofactor biosynthesis; ubiquinone biosynthesis [regulation]. In terms of biological role, is probably a protein kinase regulator of UbiI activity which is involved in aerobic coenzyme Q (ubiquinone) biosynthesis. The protein is Probable protein kinase UbiB of Shewanella halifaxensis (strain HAW-EB4).